Here is a 232-residue protein sequence, read N- to C-terminus: Orotate phosphoribosyltransferase (232 aa).

K28 is a 5-phospho-alpha-D-ribose 1-diphosphate binding site. 36 to 37 provides a ligand contact to orotate; that stretch reads FF. 5-phospho-alpha-D-ribose 1-diphosphate-binding positions include 78–79, R108, K109, K112, H114, and 134–142; these read YK and DDVITAGTA. Orotate-binding residues include T138 and R166.

Belongs to the purine/pyrimidine phosphoribosyltransferase family. PyrE subfamily. Homodimer.

The catalysed reaction is orotidine 5'-phosphate + diphosphate = orotate + 5-phospho-alpha-D-ribose 1-diphosphate. The protein operates within pyrimidine metabolism; UMP biosynthesis via de novo pathway; UMP from orotate: step 1/2. Its function is as follows. Catalyzes the transfer of a ribosyl phosphate group from 5-phosphoribose 1-diphosphate to orotate, leading to the formation of orotidine monophosphate (OMP). The polypeptide is Orotate phosphoribosyltransferase (URA5) (Sordaria macrospora).